Reading from the N-terminus, the 274-residue chain is MQFSKMHGLGNDFMVVDAVTQNVFFSPELIRRLADRHVGVGFDQLLVVEPPYDPDLDFHYRIFNADGSEVSQCGNGARCFARFVRLKGLTNKRDICVSTANGRMILSVTDDELVRVNMGEPNFEPSAVPFRAIKAEKTYIMRASEQTVLCGVVSMGNPHCVIQVDDVDTAAVEILGPIMESHERFPERANIGFMQVMKREHIRLRVYERGAGETRACGSGACAAVAVGISQGLLAEEVRVELPGGRLDIAWKGPGHPLFMTGPAAHVYDGFIHL.

Residues N11, Q44, and N64 each contribute to the substrate site. C73 serves as the catalytic Proton donor. Substrate-binding positions include 74-75 (GN), N157, N190, and 208-209 (ER). The active-site Proton acceptor is C217. 218–219 (GS) is a binding site for substrate.

Belongs to the diaminopimelate epimerase family. Homodimer.

The protein localises to the cytoplasm. It carries out the reaction (2S,6S)-2,6-diaminopimelate = meso-2,6-diaminopimelate. Its pathway is amino-acid biosynthesis; L-lysine biosynthesis via DAP pathway; DL-2,6-diaminopimelate from LL-2,6-diaminopimelate: step 1/1. Catalyzes the stereoinversion of LL-2,6-diaminopimelate (L,L-DAP) to meso-diaminopimelate (meso-DAP), a precursor of L-lysine and an essential component of the bacterial peptidoglycan. The protein is Diaminopimelate epimerase of Enterobacter sp. (strain 638).